Reading from the N-terminus, the 402-residue chain is 3-isopropylmalate dehydratase large subunit 2 (402 aa).

[4Fe-4S] cluster-binding residues include Cys280, Cys341, and Cys344.

Belongs to the aconitase/IPM isomerase family. LeuC type 2 subfamily. Heterodimer of LeuC and LeuD. The cofactor is [4Fe-4S] cluster.

The catalysed reaction is (2R,3S)-3-isopropylmalate = (2S)-2-isopropylmalate. The protein operates within amino-acid biosynthesis; L-leucine biosynthesis; L-leucine from 3-methyl-2-oxobutanoate: step 2/4. Its function is as follows. Catalyzes the isomerization between 2-isopropylmalate and 3-isopropylmalate, via the formation of 2-isopropylmaleate. The protein is 3-isopropylmalate dehydratase large subunit 2 of Methanopyrus kandleri (strain AV19 / DSM 6324 / JCM 9639 / NBRC 100938).